The sequence spans 152 residues: Deoxyuridine 5'-triphosphate nucleotidohydrolase (152 aa).

Substrate contacts are provided by residues 70 to 72 (RSG), Asn83, 87 to 89 (TID), and Lys97.

It belongs to the dUTPase family. The cofactor is Mg(2+).

The catalysed reaction is dUTP + H2O = dUMP + diphosphate + H(+). The protein operates within pyrimidine metabolism; dUMP biosynthesis; dUMP from dCTP (dUTP route): step 2/2. This enzyme is involved in nucleotide metabolism: it produces dUMP, the immediate precursor of thymidine nucleotides and it decreases the intracellular concentration of dUTP so that uracil cannot be incorporated into DNA. The sequence is that of Deoxyuridine 5'-triphosphate nucleotidohydrolase from Corynebacterium diphtheriae (strain ATCC 700971 / NCTC 13129 / Biotype gravis).